A 497-amino-acid polypeptide reads, in one-letter code: Probable malate:quinone oxidoreductase (497 aa).

Belongs to the MQO family. The cofactor is FAD.

The catalysed reaction is (S)-malate + a quinone = a quinol + oxaloacetate. The protein operates within carbohydrate metabolism; tricarboxylic acid cycle; oxaloacetate from (S)-malate (quinone route): step 1/1. This chain is Probable malate:quinone oxidoreductase, found in Prochlorococcus marinus subsp. pastoris (strain CCMP1986 / NIES-2087 / MED4).